The primary structure comprises 410 residues: Maintenance of mitochondrial morphology protein 1 (410 aa).

The Lumenal portion of the chain corresponds to 1–19; it reads MTPDSCPVRPEPTLSFTQG. The helical transmembrane segment at 20 to 40 threads the bilayer; sequence LIVGQISVVFLIAAFIKFFIF. The Cytoplasmic segment spans residues 41–410; sequence GDPPSAEETA…PMPGSLAVDD (370 aa). Residues 71–87 show a composition bias toward polar residues; that stretch reads LRTSNQRPGSQQQQSVL. The interval 71-98 is disordered; the sequence is LRTSNQRPGSQQQQSVLNRKKSSILRSG. Residues 119-335 enclose the SMP-LTD domain; sequence QPESLDWFNV…EPRFQEIPLP (217 aa). Residues 380–410 are disordered; sequence ARQAAQRDSLRYRRPRADDAFPMPGSLAVDD. The span at 387–398 shows a compositional bias: basic and acidic residues; that stretch reads DSLRYRRPRADD.

The protein belongs to the MMM1 family. As to quaternary structure, homodimer. Component of the ER-mitochondria encounter structure (ERMES) or MDM complex, composed of MMM1, MDM10, MDM12 and MDM34. An MMM1 homodimer associates with one molecule of MDM12 on each side in a pairwise head-to-tail manner, and the SMP-LTD domains of MMM1 and MDM12 generate a continuous hydrophobic tunnel for phospholipid trafficking.

It localises to the endoplasmic reticulum membrane. Functionally, component of the ERMES/MDM complex, which serves as a molecular tether to connect the endoplasmic reticulum (ER) and mitochondria. Components of this complex are involved in the control of mitochondrial shape and protein biogenesis, and function in nonvesicular lipid trafficking between the ER and mitochondria. The MDM12-MMM1 subcomplex functions in the major beta-barrel assembly pathway that is responsible for biogenesis of all outer membrane beta-barrel proteins, and acts in a late step after the SAM complex. The MDM10-MDM12-MMM1 subcomplex further acts in the TOM40-specific pathway after the action of the MDM12-MMM1 complex. Essential for establishing and maintaining the structure of mitochondria and maintenance of mtDNA nucleoids. This is Maintenance of mitochondrial morphology protein 1 from Pyricularia oryzae (strain 70-15 / ATCC MYA-4617 / FGSC 8958) (Rice blast fungus).